The following is a 458-amino-acid chain: Cell death abnormality protein 8 (458 aa).

At Met-1–Cys-45 the chain is on the cytoplasmic side. A helical transmembrane segment spans residues Phe-46–Phe-66. Over His-67–Ser-77 the chain is Extracellular. The helical transmembrane segment at Leu-78–Met-98 threads the bilayer. Residues Leu-99–Arg-123 are Cytoplasmic-facing. Residues Phe-124 to Tyr-144 form a helical membrane-spanning segment. Topologically, residues Tyr-145 to Trp-219 are extracellular. Residues Leu-220–Val-240 traverse the membrane as a helical segment. Residues Gln-241–Arg-274 are Cytoplasmic-facing. The next 2 membrane-spanning stretches (helical) occupy residues Ile-275–Val-295 and His-296–Thr-316. A topological domain (extracellular) is located at residue His-317. The helical transmembrane segment at Ile-318 to Val-338 threads the bilayer. Residues Glu-339–Glu-353 are Cytoplasmic-facing. A helical transmembrane segment spans residues Phe-354–Ile-374. Residues Glu-375 to Gln-378 lie on the Extracellular side of the membrane. Residues Val-379–Phe-399 form a helical membrane-spanning segment. The Cytoplasmic portion of the chain corresponds to His-400–Asn-458.

It belongs to the XK family. In terms of processing, cleavage by ced-3 activates ced-8 function in promoting phosphatidylserine exposure at the surface of apoptotic cells.

It localises to the cell membrane. The catalysed reaction is a 1,2-diacyl-sn-glycero-3-phospho-L-serine(in) = a 1,2-diacyl-sn-glycero-3-phospho-L-serine(out). Phospholipid scramblase that acts downstream of ced-9 and caspase ced-3 to promote phosphatidylserine exposure on apoptotic cell surface. Phosphatidylserine is a specific marker only present at the surface of apoptotic cells and acts as a specific signal for engulfment. Regulates apoptosis kinetics during embryonic development. Not required for engulfment of germ cell corpses. This chain is Cell death abnormality protein 8, found in Caenorhabditis elegans.